Here is a 117-residue protein sequence, read N- to C-terminus: MTRIKRGVSSKFRHKKILKKTKGYYGARSRSYRIAFQAFIKAGQYAYRDRKNKKRTFRKIWICRINSAVRKHGLSYSCFMYKIKKLSIFIDRKILSDLAVLNKEAFSELIKKVKSIS.

The protein belongs to the bacterial ribosomal protein bL20 family.

Its function is as follows. Binds directly to 23S ribosomal RNA and is necessary for the in vitro assembly process of the 50S ribosomal subunit. It is not involved in the protein synthesizing functions of that subunit. The sequence is that of Large ribosomal subunit protein bL20 from Wigglesworthia glossinidia brevipalpis.